Consider the following 411-residue polypeptide: LL-diaminopimelate aminotransferase (411 aa).

Positions 16 and 43 each coordinate substrate. Pyridoxal 5'-phosphate contacts are provided by residues Tyr73, 109 to 110 (AK), Tyr133, Asn188, Tyr219, and 247 to 249 (SYS). The substrate site is built by Lys110, Tyr133, and Asn188. The residue at position 250 (Lys250) is an N6-(pyridoxal phosphate)lysine. 2 residues coordinate pyridoxal 5'-phosphate: Arg258 and Asn293. Residues Asn293 and Arg389 each coordinate substrate.

Belongs to the class-I pyridoxal-phosphate-dependent aminotransferase family. LL-diaminopimelate aminotransferase subfamily. As to quaternary structure, homodimer. Requires pyridoxal 5'-phosphate as cofactor.

The enzyme catalyses (2S,6S)-2,6-diaminopimelate + 2-oxoglutarate = (S)-2,3,4,5-tetrahydrodipicolinate + L-glutamate + H2O + H(+). It participates in amino-acid biosynthesis; L-lysine biosynthesis via DAP pathway; LL-2,6-diaminopimelate from (S)-tetrahydrodipicolinate (aminotransferase route): step 1/1. Its function is as follows. Involved in the synthesis of meso-diaminopimelate (m-DAP or DL-DAP), required for both lysine and peptidoglycan biosynthesis. Catalyzes the direct conversion of tetrahydrodipicolinate to LL-diaminopimelate. The sequence is that of LL-diaminopimelate aminotransferase from Methanosphaera stadtmanae (strain ATCC 43021 / DSM 3091 / JCM 11832 / MCB-3).